The primary structure comprises 464 residues: Asparagine--tRNA ligase (464 aa).

This sequence belongs to the class-II aminoacyl-tRNA synthetase family. In terms of assembly, homodimer.

The protein localises to the cytoplasm. It carries out the reaction tRNA(Asn) + L-asparagine + ATP = L-asparaginyl-tRNA(Asn) + AMP + diphosphate + H(+). The protein is Asparagine--tRNA ligase of Xanthomonas axonopodis pv. citri (strain 306).